Reading from the N-terminus, the 126-residue chain is UPF0047 protein AF_2050 (126 aa).

The protein belongs to the UPF0047 family.

In Archaeoglobus fulgidus (strain ATCC 49558 / DSM 4304 / JCM 9628 / NBRC 100126 / VC-16), this protein is UPF0047 protein AF_2050.